The chain runs to 402 residues: F-box/kelch-repeat protein At4g39590 (402 aa).

Over residues 1–14 (MFPMSSTSRSSAAN) the composition is skewed to low complexity. The disordered stretch occupies residues 1-37 (MFPMSSTSRSSAANNRKDPPRKKNKETPSPVTREPTS). Residues 27 to 37 (TPSPVTREPTS) show a composition bias toward polar residues. Positions 35 to 81 (PTSIDSLPNDLLLNCFARVSRMYYPALSRVSKRFRSIVTSPEIYNTR) constitute an F-box domain. 4 Kelch repeats span residues 143-198 (NIYR…VVDG), 199-246 (KIYV…YRRA), 255-300 (KLYL…LFYW), and 302-341 (QGVFKWYDSKVSSWKQLKGLEGLPDDFSQREYCKLVDLGG).

The protein is F-box/kelch-repeat protein At4g39590 of Arabidopsis thaliana (Mouse-ear cress).